Here is a 324-residue protein sequence, read N- to C-terminus: Homeobox protein engrailed-2 (324 aa).

Disordered regions lie at residues 1-59, 89-174, and 215-240; these read MEEK…HQHP, GGAR…VLKA, and DRPSSGPRSRKPKKKNPNKEDKRPRT. Positions 89 to 110 are enriched in gly residues; it reads GGARGGEGGAGTTEGGGGGAGG. A DNA-binding region (homeobox) is located at residues 235–294; sequence DKRPRTAFTAEQLQRLKAEFQTNRYLTEQRRQSLAQELSLNESQIKIWFQNKRAKIKKAT.

Belongs to the engrailed homeobox family. Cerebellar granule cells.

The protein resides in the nucleus. This chain is Homeobox protein engrailed-2 (En2), found in Mus musculus (Mouse).